Consider the following 433-residue polypeptide: Serine hydroxymethyltransferase (433 aa).

(6S)-5,6,7,8-tetrahydrofolate-binding positions include L132 and 136-138 (GHL). K241 carries the post-translational modification N6-(pyridoxal phosphate)lysine.

It belongs to the SHMT family. Homodimer. Pyridoxal 5'-phosphate serves as cofactor.

The protein localises to the cytoplasm. It catalyses the reaction (6R)-5,10-methylene-5,6,7,8-tetrahydrofolate + glycine + H2O = (6S)-5,6,7,8-tetrahydrofolate + L-serine. Its pathway is one-carbon metabolism; tetrahydrofolate interconversion. It functions in the pathway amino-acid biosynthesis; glycine biosynthesis; glycine from L-serine: step 1/1. In terms of biological role, catalyzes the reversible interconversion of serine and glycine with tetrahydrofolate (THF) serving as the one-carbon carrier. This reaction serves as the major source of one-carbon groups required for the biosynthesis of purines, thymidylate, methionine, and other important biomolecules. Also exhibits THF-independent aldolase activity toward beta-hydroxyamino acids, producing glycine and aldehydes, via a retro-aldol mechanism. This is Serine hydroxymethyltransferase from Methylobacterium sp. (strain 4-46).